The sequence spans 212 residues: Deoxyribose-phosphate aldolase (212 aa).

Residue D89 is the Proton donor/acceptor of the active site. The active-site Schiff-base intermediate with acetaldehyde is K151. The active-site Proton donor/acceptor is K180.

Belongs to the DeoC/FbaB aldolase family. DeoC type 1 subfamily.

It is found in the cytoplasm. The enzyme catalyses 2-deoxy-D-ribose 5-phosphate = D-glyceraldehyde 3-phosphate + acetaldehyde. It functions in the pathway carbohydrate degradation; 2-deoxy-D-ribose 1-phosphate degradation; D-glyceraldehyde 3-phosphate and acetaldehyde from 2-deoxy-alpha-D-ribose 1-phosphate: step 2/2. In terms of biological role, catalyzes a reversible aldol reaction between acetaldehyde and D-glyceraldehyde 3-phosphate to generate 2-deoxy-D-ribose 5-phosphate. The sequence is that of Deoxyribose-phosphate aldolase from Clostridium botulinum (strain Loch Maree / Type A3).